A 303-amino-acid polypeptide reads, in one-letter code: 2-dehydropantoate 2-reductase (303 aa).

NADP(+) contacts are provided by residues 7 to 12 (GCGALG), N98, and A122. A substrate-binding site is contributed by N98. Catalysis depends on K176, which acts as the Proton donor. The substrate site is built by N180, N184, N194, and S244. E256 contacts NADP(+).

This sequence belongs to the ketopantoate reductase family. Monomer.

Its subcellular location is the cytoplasm. The catalysed reaction is (R)-pantoate + NADP(+) = 2-dehydropantoate + NADPH + H(+). The protein operates within cofactor biosynthesis; (R)-pantothenate biosynthesis; (R)-pantoate from 3-methyl-2-oxobutanoate: step 2/2. Functionally, catalyzes the NADPH-dependent reduction of ketopantoate into pantoic acid. This is 2-dehydropantoate 2-reductase (panE) from Salmonella typhi.